A 501-amino-acid chain; its full sequence is MVLWGPVLGALLVVIAGYLCLPGMLRQRRPWEPPLDKGTVPWLGHAMAFRKNMFEFLKRMRTKHGDVFTVQLGGQYFTFVMDPLSFGSILKDTQRKLDFGQYAKKLVLKVFGYRSVQGDHEMIHSASTKHLRGDGLKDLNETMLDSLSFVMLTSKGWSLDASCWHEDSLFRFCYYILFTAGYLSLFGYTKDKEQDLLQAGELFMEFRKFDLLFPRFVYSLLWPREWLEVGRLQRLFHKMLSVSHSQEKEGISNWLGNMLQFLREQGVPSAMQDKFNFMMLWASQGNTGPTSFWALLYLLKHPEAIRAVREEATQVLGEARLETKQSFAFKLGALQHTPVLDSVVEETLRLRAAPTLLRLVHEDYTLKMSSGQEYLFRHGDILALFPYLSVHMDPDIHPEPTVFKYDRFLNPNGSRKVDFFKTGKKIHHYTMPWGSGVSICPGRFFALSEVKLFILLMVTHFDLELVDPDTPLPHVDPQRWGFGTMQPSHDVRFRYRLHPTE.

A helical membrane pass occupies residues 1 to 21 (MVLWGPVLGALLVVIAGYLCL). Ser326 is modified (phosphoserine). Cys440 provides a ligand contact to heme.

The protein belongs to the cytochrome P450 family. It depends on heme as a cofactor. Liver.

It localises to the endoplasmic reticulum membrane. It is found in the microsome membrane. The enzyme catalyses 7alpha-hydroxycholest-4-en-3-one + reduced [NADPH--hemoprotein reductase] + O2 = 7alpha,12alpha-dihydroxycholest-4-en-3-one + oxidized [NADPH--hemoprotein reductase] + H2O + H(+). It carries out the reaction 5beta-cholestane-3alpha,7alpha-diol + reduced [NADPH--hemoprotein reductase] + O2 = 5beta-cholestane-3alpha,7alpha,12alpha-triol + oxidized [NADPH--hemoprotein reductase] + H2O + H(+). It catalyses the reaction chenodeoxycholate + reduced [NADPH--hemoprotein reductase] + O2 = cholate + oxidized [NADPH--hemoprotein reductase] + H2O + H(+). It functions in the pathway lipid metabolism; bile acid biosynthesis. In terms of biological role, a cytochrome P450 monooxygenase involved in primary bile acid biosynthesis. Catalyzes the 12alpha-hydroxylation of 7alpha-hydroxy-4-cholesten-3-one, an intermediate metabolite in cholic acid biosynthesis. Controls biliary balance of cholic acid and chenodeoxycholic acid, ultimately regulating the intestinal absorption of dietary lipids. Mechanistically, uses molecular oxygen inserting one oxygen atom into a substrate, and reducing the second into a water molecule, with two electrons provided by NADPH via cytochrome P450 reductase (CPR; NADPH--hemoprotein reductase). In Homo sapiens (Human), this protein is 7-alpha-hydroxycholest-4-en-3-one 12-alpha-hydroxylase.